A 157-amino-acid chain; its full sequence is DNA gyrase inhibitor (157 aa).

The protein belongs to the DNA gyrase inhibitor family. As to quaternary structure, interacts with DNA gyrase.

It is found in the cytoplasm. In terms of biological role, inhibits the supercoiling activity of DNA gyrase. Acts by inhibiting DNA gyrase at an early step, prior to (or at the step of) binding of DNA by the gyrase. It protects cells against toxins that target DNA gyrase, by inhibiting activity of these toxins and reducing the formation of lethal double-strand breaks in the cell. This Klebsiella pneumoniae (strain 342) protein is DNA gyrase inhibitor.